Reading from the N-terminus, the 1166-residue chain is ATP-dependent helicase/deoxyribonuclease subunit B (1166 aa).

In terms of domain architecture, UvrD-like helicase ATP-binding spans 1-290; the sequence is MGMRFILGRS…DTLEGNFQNR (290 aa). 8-15 is an ATP binding site; the sequence is GRSGTNKS. The region spanning 283–588 is the UvrD-like helicase C-terminal domain; that stretch reads LEGNFQNRPY…QFSHVPPSMD (306 aa). Positions 802, 1123, 1126, and 1132 each coordinate [4Fe-4S] cluster.

Belongs to the helicase family. AddB/RexB type 1 subfamily. As to quaternary structure, heterodimer of AddA and AddB. It depends on Mg(2+) as a cofactor. [4Fe-4S] cluster is required as a cofactor.

In terms of biological role, the heterodimer acts as both an ATP-dependent DNA helicase and an ATP-dependent, dual-direction single-stranded exonuclease. Recognizes the chi site generating a DNA molecule suitable for the initiation of homologous recombination. The AddB subunit has 5' -&gt; 3' nuclease activity but not helicase activity. The polypeptide is ATP-dependent helicase/deoxyribonuclease subunit B (Oceanobacillus iheyensis (strain DSM 14371 / CIP 107618 / JCM 11309 / KCTC 3954 / HTE831)).